The following is a 350-amino-acid chain: Nicotinate-nucleotide--dimethylbenzimidazole phosphoribosyltransferase (350 aa).

Residue Glu317 is the Proton acceptor of the active site.

It belongs to the CobT family.

The enzyme catalyses 5,6-dimethylbenzimidazole + nicotinate beta-D-ribonucleotide = alpha-ribazole 5'-phosphate + nicotinate + H(+). It participates in nucleoside biosynthesis; alpha-ribazole biosynthesis; alpha-ribazole from 5,6-dimethylbenzimidazole: step 1/2. In terms of biological role, catalyzes the synthesis of alpha-ribazole-5'-phosphate from nicotinate mononucleotide (NAMN) and 5,6-dimethylbenzimidazole (DMB). This Shewanella sp. (strain W3-18-1) protein is Nicotinate-nucleotide--dimethylbenzimidazole phosphoribosyltransferase.